Consider the following 1491-residue polypeptide: Copper-transporting ATPase 1 (1491 aa).

Topologically, residues 1 to 644 (MEPSVDANSI…KREIKQWRGS (644 aa)) are cytoplasmic. HMA domains follow at residues 8 to 74 (NSIT…FDAL) and 85 to 151 (TNTV…LDMG). Residues Thr-18, Cys-19, and Cys-22 each contribute to the Cu(+) site. Residue Thr-152 is modified to Phosphothreonine. The 67-residue stretch at 171–237 (VMLKMKVEGM…QIEAVGFPAF (67 aa)) folds into the HMA 3 domain. The Cu(+) site is built by Cys-182 and Cys-185. Ser-270 is modified (phosphoserine). Positions 277–343 (STTMFTIEGM…AIEAISPGQY (67 aa)) constitute an HMA 4 domain. 2 residues coordinate Cu(+): Cys-288 and Cys-291. Thr-327 bears the Phosphothreonine mark. Phosphoserine occurs at positions 339, 353, 357, and 362. HMA domains lie at 377–443 (QEAV…FDAA), 479–545 (NKCY…FGAM), and 555–621 (GILE…FEAS). The Cu(+) site is built by Cys-388, Cys-391, Cys-490, Cys-493, Cys-566, and Cys-569. The chain crosses the membrane as a helical span at residues 645-666 (FLVSLFFCIPVMGLMVYMMVMD). Residues 667 to 705 (HHLATLHHNQNMSNEEMINMHSAMFLERQILPGLSIMNL) lie on the Extracellular side of the membrane. Residue Asn-677 is glycosylated (N-linked (GlcNAc...) asparagine). A helical transmembrane segment spans residues 706 to 725 (LSLLLCLPVQFCGGWYFYIQ). Residues 726 to 732 (AYKALKH) lie on the Cytoplasmic side of the membrane. A helical membrane pass occupies residues 733–753 (KTANMDVLIVLATTIAFAYSL). At 754–772 (VILLVAMFERAKVNPITFF) the chain is on the extracellular side. The helical transmembrane segment at 773-793 (DTPPMLFVFIALGRWLEHIAK) threads the bilayer. Over 794-926 (GKTSEALAKL…SKAPIQQFAD (133 aa)) the chain is Cytoplasmic. A helical transmembrane segment spans residues 927–950 (KLSGYFVPFIVLVSIVTLLVWIII). Residues 951–980 (GFQNFEIVETYFPGYNRSISRTETIIRFAF) are Extracellular-facing. Asn-966 carries N-linked (GlcNAc...) asparagine glycosylation. The helical transmembrane segment at 981–1002 (QASITVLCIACPCSLGLATPTA) threads the bilayer. The Cytoplasmic portion of the chain corresponds to 1003 to 1347 (VMVGTGVGAQ…LSRKTVKRIR (345 aa)). The 4-aspartylphosphate intermediate role is filled by Asp-1035. Glu-1072 provides a ligand contact to ATP. Thr-1203 carries the post-translational modification Phosphothreonine. 2 residues coordinate Mg(2+): Asp-1292 and Asp-1296. Residues 1348-1365 (INFVFALIYNLVGIPIAA) form a helical membrane-spanning segment. Over 1366–1376 (GVFLPIGLVLQ) the chain is Extracellular. Residues 1377-1396 (PWMGSAAMAASSVSVVLSSL) form a helical membrane-spanning segment. Residues 1397-1491 (FLKLYRKPTY…DFREDDDTTL (95 aa)) are Cytoplasmic-facing. 5 positions are modified to phosphoserine: Ser-1421, Ser-1423, Ser-1451, Ser-1454, and Ser-1457. Residues 1458–1459 (LL) carry the Endocytosis signal motif. Residues Ser-1460, Ser-1464, Ser-1467, and Ser-1477 each carry the phosphoserine modification. The tract at residues 1477 to 1491 (SLLVGDFREDDDTTL) is PDZD11-binding. The Endocytosis signal motif lies at 1478–1479 (LL).

Belongs to the cation transport ATPase (P-type) (TC 3.A.3) family. Type IB subfamily. As to quaternary structure, monomer. Interacts with PDZD11. Interacts with ATOX1 and COMMD1. Interacts with TYRP1. Directly interacts with SOD3; this interaction is copper-dependent and is required for SOD3 activity. As to expression, widely expressed. Highly expressed in pituitary endocrine cells. Expressed in melanocytes (at protein level). Expressed in motor neuron (at protein level). Expressed in hippocampal neuron (at protein level). In the kidney, it is detected in the proximal and distal tubules (at protein level). Expressed in aorta (at protein level).

The protein localises to the golgi apparatus. It localises to the trans-Golgi network membrane. It is found in the cell membrane. Its subcellular location is the melanosome membrane. The protein resides in the early endosome membrane. The protein localises to the cell projection. It localises to the axon. It is found in the dendrite. Its subcellular location is the postsynaptic density. It catalyses the reaction Cu(+)(in) + ATP + H2O = Cu(+)(out) + ADP + phosphate + H(+). ATP-driven copper (Cu(+)) ion pump that plays an important role in intracellular copper ion homeostasis. Within a catalytic cycle, acquires Cu(+) ion from donor protein on the cytoplasmic side of the membrane and delivers it to acceptor protein on the lumenal side. The transfer of Cu(+) ion across the membrane is coupled to ATP hydrolysis and is associated with a transient phosphorylation that shifts the pump conformation from inward-facing to outward-facing state. Under physiological conditions, at low cytosolic copper concentration, it is localized at the trans-Golgi network (TGN) where it transfers Cu(+) ions to cuproenzymes of the secretory pathway. Upon elevated cytosolic copper concentrations, it relocalizes to the plasma membrane where it is responsible for the export of excess Cu(+) ions. May play a dual role in neuron function and survival by regulating cooper efflux and neuronal transmission at the synapse as well as by supplying Cu(+) ions to enzymes such as PAM, TYR and SOD3. In the melanosomes of pigmented cells, provides copper cofactor to TYR to form an active TYR holoenzyme for melanin biosynthesis. The polypeptide is Copper-transporting ATPase 1 (Mus musculus (Mouse)).